Reading from the N-terminus, the 159-residue chain is NAD(P)H-quinone oxidoreductase subunit J, chloroplastic (159 aa).

It belongs to the complex I 30 kDa subunit family. As to quaternary structure, NDH is composed of at least 16 different subunits, 5 of which are encoded in the nucleus. As to expression, leaves.

It is found in the plastid. The protein resides in the chloroplast thylakoid membrane. The catalysed reaction is a plastoquinone + NADH + (n+1) H(+)(in) = a plastoquinol + NAD(+) + n H(+)(out). It catalyses the reaction a plastoquinone + NADPH + (n+1) H(+)(in) = a plastoquinol + NADP(+) + n H(+)(out). Functionally, NDH shuttles electrons from NAD(P)H:plastoquinone, via FMN and iron-sulfur (Fe-S) centers, to quinones in the photosynthetic chain and possibly in a chloroplast respiratory chain. The immediate electron acceptor for the enzyme in this species is believed to be plastoquinone. Couples the redox reaction to proton translocation, and thus conserves the redox energy in a proton gradient. The polypeptide is NAD(P)H-quinone oxidoreductase subunit J, chloroplastic (Zea mays (Maize)).